A 127-amino-acid polypeptide reads, in one-letter code: Small ribosomal subunit protein eS8 (127 aa).

A disordered region spans residues 1 to 24 (MKWQGKSARKPTGGRLVPARGKRK).

Belongs to the eukaryotic ribosomal protein eS8 family. In terms of assembly, part of the 30S ribosomal subunit.

This chain is Small ribosomal subunit protein eS8, found in Methanothrix thermoacetophila (strain DSM 6194 / JCM 14653 / NBRC 101360 / PT) (Methanosaeta thermophila).